The chain runs to 249 residues: tRNA 2'-phosphotransferase 1 (249 aa).

Met-1 carries the N-acetylmethionine modification. Disordered stretches follow at residues 1 to 25 (MNAP…RNVQ) and 220 to 249 (KPLS…KIQQ).

This sequence belongs to the KptA/TPT1 family.

The catalysed reaction is 2'-phospho-[ligated tRNA] + NAD(+) = mature tRNA + ADP-alpha-D-ribose 1'',2''-cyclic phosphate + nicotinamide. Functionally, catalyzes the last step of tRNA splicing, the transfer of the splice junction 2'-phosphate from ligated tRNA to NAD to produce ADP-ribose 1''-2'' cyclic phosphate. The polypeptide is tRNA 2'-phosphotransferase 1 (Trpt1) (Mus musculus (Mouse)).